We begin with the raw amino-acid sequence, 121 residues long: Large ribosomal subunit protein uL14 (121 aa).

This sequence belongs to the universal ribosomal protein uL14 family. In terms of assembly, part of the 50S ribosomal subunit. Forms a cluster with proteins L3 and L19. In the 70S ribosome, L14 and L19 interact and together make contacts with the 16S rRNA in bridges B5 and B8.

Functionally, binds to 23S rRNA. Forms part of two intersubunit bridges in the 70S ribosome. The chain is Large ribosomal subunit protein uL14 from Prochlorococcus marinus (strain MIT 9211).